We begin with the raw amino-acid sequence, 256 residues long: Thiazole synthase (256 aa).

Residue K91 is the Schiff-base intermediate with DXP of the active site. 1-deoxy-D-xylulose 5-phosphate contacts are provided by residues G152, 179–180, and 201–202; these read AG and NT.

The protein belongs to the ThiG family. Homotetramer. Forms heterodimers with either ThiH or ThiS.

The protein resides in the cytoplasm. The catalysed reaction is [ThiS sulfur-carrier protein]-C-terminal-Gly-aminoethanethioate + 2-iminoacetate + 1-deoxy-D-xylulose 5-phosphate = [ThiS sulfur-carrier protein]-C-terminal Gly-Gly + 2-[(2R,5Z)-2-carboxy-4-methylthiazol-5(2H)-ylidene]ethyl phosphate + 2 H2O + H(+). The protein operates within cofactor biosynthesis; thiamine diphosphate biosynthesis. Its function is as follows. Catalyzes the rearrangement of 1-deoxy-D-xylulose 5-phosphate (DXP) to produce the thiazole phosphate moiety of thiamine. Sulfur is provided by the thiocarboxylate moiety of the carrier protein ThiS. In vitro, sulfur can be provided by H(2)S. The sequence is that of Thiazole synthase from Erwinia tasmaniensis (strain DSM 17950 / CFBP 7177 / CIP 109463 / NCPPB 4357 / Et1/99).